Consider the following 73-residue polypeptide: Protein F9 homolog (73 aa).

The Virion surface portion of the chain corresponds to 1 to 34 (GHAAANCALARVATALTRRVPASRHGLAEGGTPP). The helical transmembrane segment at 35–55 (WTLLLAVAAVTVLGVVAVSLL) threads the bilayer. Residues 56–73 (RRALRVRYRFARPAALRA) lie on the Intravirion side of the membrane.

Belongs to the chordopoxvirinae L1 protein family.

Its subcellular location is the virion membrane. In Capra hircus (Goat), this protein is Protein F9 homolog.